We begin with the raw amino-acid sequence, 62 residues long: Photosystem II reaction center X protein (62 aa).

The helical transmembrane segment at 26-46 threads the bilayer; the sequence is IASFFAAALLIVIPAATFLIF.

It belongs to the PsbX family. Type 2 subfamily. As to quaternary structure, PSII consists of a core antenna complex that captures photons, and an electron transfer chain that converts photonic excitation into a charge separation. PSII forms dimeric complexes.

Its subcellular location is the cellular thylakoid membrane. Functionally, involved in the binding and/or turnover of quinones at the Q(B) site of Photosystem II. The protein is Photosystem II reaction center X protein of Prochlorococcus marinus (strain MIT 9515).